We begin with the raw amino-acid sequence, 189 residues long: DnaJ homolog subfamily C member 5G (189 aa).

The J domain maps to 17–98; that stretch reads SLYAVLDLKK…KKRKIYDQHG (82 aa). Positions 154-189 are disordered; sequence PEQDSGRKYQQNVQSQPPRSGAKCDFRSEENSEDDF. The span at 161 to 171 shows a compositional bias: polar residues; it reads KYQQNVQSQPP.

In terms of processing, palmitoylated. Testis specific.

The protein resides in the membrane. The polypeptide is DnaJ homolog subfamily C member 5G (DNAJC5G) (Homo sapiens (Human)).